The chain runs to 463 residues: Phytase A (463 aa).

An N-terminal signal peptide occupies residues 1-19 (MAFFTVALSLYYLLSRVST). Asn26 carries an N-linked (GlcNAc...) asparagine glycan. Cys29 and Cys38 are oxidised to a cystine. Asn41 carries an N-linked (GlcNAc...) asparagine glycan. Residues Gln48, Tyr49, Arg79, His80, Arg83, and Thr86 each contribute to the 1D-myo-inositol hexakisphosphate site. Cystine bridges form between Cys69–Cys410, Cys211–Cys460, Cys260–Cys278, and Cys431–Cys439. The active-site Nucleophile is the His80. N-linked (GlcNAc...) asparagine glycosylation is found at Asn103 and Asn118. Residue Arg163 coordinates 1D-myo-inositol hexakisphosphate. The N-linked (GlcNAc...) asparagine glycan is linked to Asn203. Asp207 is a 1D-myo-inositol hexakisphosphate binding site. Asn226 is a glycosylation site (N-linked (GlcNAc...) asparagine). Lys297 contacts 1D-myo-inositol hexakisphosphate. Asn331 and Asn335 each carry an N-linked (GlcNAc...) asparagine glycan. Residues His357 and Asp358 each coordinate 1D-myo-inositol hexakisphosphate. An N-linked (GlcNAc...) asparagine glycan is attached at Asn372.

Belongs to the histidine acid phosphatase family. In terms of assembly, monomer. Seems to be cleaved into at least two pieces, most likely due to proteases in the supernatant. The N-terminal fragment, called phyB seems to retain phytase activity.

Its subcellular location is the secreted. It carries out the reaction 1D-myo-inositol hexakisphosphate + H2O = 1D-myo-inositol 1,2,4,5,6-pentakisphosphate + phosphate. The catalysed reaction is 1D-myo-inositol 1,2,4,5,6-pentakisphosphate + H2O = 1D-myo-inositol 1,2,5,6-tetrakisphosphate + phosphate. It catalyses the reaction 1D-myo-inositol 1,2,5,6-tetrakisphosphate + H2O = 1D-myo-inositol 1,2,6-trisphosphate + phosphate. The enzyme catalyses 1D-myo-inositol 1,2,6-trisphosphate + H2O = 1D-myo-inositol 1,2-bisphosphate + phosphate. It carries out the reaction 1D-myo-inositol 1,2-bisphosphate + H2O = 1D-myo-inositol 2-phosphate + phosphate. Functionally, catalyzes the phosphate monoester hydrolysis of phytic acid (myo-inositol hexakisphosphate), which results in the stepwise formation of myo-inositol pentakis-, tetrakis-, tris-, bis-, and monophosphates, as well as the liberation of inorganic phosphate. Myo-inositol 2-monophosphate is the end product. Has a broad substrate specificity and is also able to dephosphorylate other classic acid phosphatase substrates such as p-nitrophenyl phosphate, phenyl phosphate, fructose 1,6-bisphosphate, fructose 6-phosphate, glucose 6-phosphate, ribose 5-phosphate, alpha-glycerophosphate, beta-glycerophosphate, 3-phosphoglycerate, as well as ADP and ATP. The protein is Phytase A of Emericella nidulans (strain FGSC A4 / ATCC 38163 / CBS 112.46 / NRRL 194 / M139) (Aspergillus nidulans).